The chain runs to 926 residues: Protein transport protein SEC24-2 (926 aa).

The disordered stretch occupies residues 1–54 (MSHHKKRVYPQAQAQYGQSATPLQQPAQLVPPQDPAAAGMSYAQMGMPPQGAAA). The segment covering 20 to 54 (ATPLQQPAQLVPPQDPAAAGMSYAQMGMPPQGAAA) has biased composition (low complexity). Zn(2+)-binding residues include Cys-231, Cys-234, Cys-253, and Cys-256. Residues 231–256 (CRRCRSYMNPFITFIEQGRRWRCNFC) are zinc finger-like.

The protein belongs to the SEC23/SEC24 family. SEC24 subfamily. As to quaternary structure, the COPII coat is composed of at least 5 proteins: the SEC23/24 complex, the SEC13/31 complex, and the protein SAR1. Golgi apparatus membrane; Peripheral membrane protein; Cytoplasmic side.

The protein localises to the cytoplasm. The protein resides in the cytoplasmic vesicle. It localises to the COPII-coated vesicle membrane. It is found in the endoplasmic reticulum membrane. Its subcellular location is the golgi apparatus membrane. In terms of biological role, component of the coat protein complex II (COPII) which promotes the formation of transport vesicles from the endoplasmic reticulum (ER). The coat has two main functions, the physical deformation of the endoplasmic reticulum membrane into vesicles and the selection of cargo molecules. This Saccharomyces uvarum (strain ATCC 76518 / CBS 7001 / CLIB 283 / NBRC 10550 / MCYC 623 / NCYC 2669 / NRRL Y-11845) (Yeast) protein is Protein transport protein SEC24-2 (SEC242).